Consider the following 152-residue polypeptide: MATLLRVSSLCRANRASAFKSLLIRPLPCLSQDLHMVQTSQIHTSPNHHAGSKAASMHWTGERALSVALLGLLPAAYLYPGAAMDYSLAAALTLHGHWGLGQVVTDYVHGETKIKMANTSLFALSALTFAGLCYFNYHDVGICKAVAMLWSL.

Residues 1–21 constitute a mitochondrion transit peptide; the sequence is MATLLRVSSLCRANRASAFKS. Residues 22–56 are Mitochondrial matrix-facing; the sequence is LLIRPLPCLSQDLHMVQTSQIHTSPNHHAGSKAAS. The chain crosses the membrane as a helical span at residues 57-78; the sequence is MHWTGERALSVALLGLLPAAYL. Residues 79–83 are Mitochondrial intermembrane-facing; sequence YPGAA. A helical membrane pass occupies residues 84-104; that stretch reads MDYSLAAALTLHGHWGLGQVV. Residue His-95 coordinates heme b. Over 105–113 the chain is Mitochondrial matrix; it reads TDYVHGETK. Tyr-107 provides a ligand contact to a ubiquinone. Residues 114–135 traverse the membrane as a helical segment; it reads IKMANTSLFALSALTFAGLCYF. Residues 136–152 are Mitochondrial intermembrane-facing; sequence NYHDVGICKAVAMLWSL.

Belongs to the CybS family. In terms of assembly, component of complex II composed of four subunits: the flavoprotein (FP) SDHA, iron-sulfur protein (IP) SDHB, and a cytochrome b560 composed of SDHC and SDHD.

It is found in the mitochondrion inner membrane. The protein operates within carbohydrate metabolism; tricarboxylic acid cycle. In terms of biological role, membrane-anchoring subunit of succinate dehydrogenase (SDH) that is involved in complex II of the mitochondrial electron transport chain and is responsible for transferring electrons from succinate to ubiquinone (coenzyme Q). SDH also oxidizes malate to the non-canonical enol form of oxaloacetate, enol-oxaloacetate. Enol-oxaloacetate, which is a potent inhibitor of the succinate dehydrogenase activity, is further isomerized into keto-oxaloacetate. The sequence is that of Succinate dehydrogenase [ubiquinone] cytochrome b small subunit B, mitochondrial (sdhd-b) from Xenopus laevis (African clawed frog).